Reading from the N-terminus, the 164-residue chain is Putative 4-hydroxy-4-methyl-2-oxoglutarate aldolase (164 aa).

Substrate contacts are provided by residues Gly-75–Leu-78 and Arg-97. Residue Asp-98 participates in a divalent metal cation binding.

It belongs to the class II aldolase/RraA-like family. Homotrimer. A divalent metal cation serves as cofactor.

It carries out the reaction 4-hydroxy-4-methyl-2-oxoglutarate = 2 pyruvate. The enzyme catalyses oxaloacetate + H(+) = pyruvate + CO2. In terms of biological role, catalyzes the aldol cleavage of 4-hydroxy-4-methyl-2-oxoglutarate (HMG) into 2 molecules of pyruvate. Also contains a secondary oxaloacetate (OAA) decarboxylase activity due to the common pyruvate enolate transition state formed following C-C bond cleavage in the retro-aldol and decarboxylation reactions. The polypeptide is Putative 4-hydroxy-4-methyl-2-oxoglutarate aldolase (Hahella chejuensis (strain KCTC 2396)).